The following is a 107-amino-acid chain: C-X-C motif chemokine 3 (107 aa).

An N-terminal signal peptide occupies residues 1–34 (MAHATLSAAPSNPRLLRVALLLLLLVAASRRAAG). Disulfide bonds link C43-C69 and C45-C85.

The protein belongs to the intercrine alpha (chemokine CxC) family. Post-translationally, N-terminal processed form GRO-gamma(5-73) is produced by proteolytic cleavage after secretion from peripheral blood monocytes.

The protein resides in the secreted. Functionally, ligand for CXCR2. Has chemotactic activity for neutrophils. May play a role in inflammation and exert its effects on endothelial cells in an autocrine fashion. In vitro, the processed form GRO-gamma(5-73) shows a fivefold higher chemotactic activity for neutrophilic granulocytes. The chain is C-X-C motif chemokine 3 (CXCL3) from Homo sapiens (Human).